A 183-amino-acid chain; its full sequence is MASRAGPRATGTDGSDYQHRERVASHYQMSVALKSEIKKLNIAHAVVWFLVAAQVLVSQLNLVSHKVVASPYQWEYTYLLSIIPTVFSFMALPKNNISYLVISMISGGLFCIGPILYGGMEMFPVAQQLYRHGKAYRFIFGFSAVSIMYLVLIISVQVHGWQIYYSKKLLDAWFTNTQDKKKK.

The Cytoplasmic portion of the chain corresponds to 1-39 (MASRAGPRATGTDGSDYQHRERVASHYQMSVALKSEIKK). The chain crosses the membrane as a helical span at residues 40–60 (LNIAHAVVWFLVAAQVLVSQL). The Lumenal segment spans residues 61 to 71 (NLVSHKVVASP). The chain crosses the membrane as a helical span at residues 72-92 (YQWEYTYLLSIIPTVFSFMAL). Residues 93 to 99 (PKNNISY) lie on the Cytoplasmic side of the membrane. Residues 100–120 (LVISMISGGLFCIGPILYGGM) form a helical membrane-spanning segment. The Lumenal segment spans residues 121-137 (EMFPVAQQLYRHGKAYR). Residues 138-158 (FIFGFSAVSIMYLVLIISVQV) traverse the membrane as a helical segment. The Cytoplasmic segment spans residues 159-183 (HGWQIYYSKKLLDAWFTNTQDKKKK).

Belongs to the jagunal family.

Its subcellular location is the endoplasmic reticulum membrane. In terms of biological role, endoplasmic reticulum transmembrane protein involved in vesicle-mediated transport, which is required for neutrophil function. The protein is Protein jagunal homolog 1-B (jagn1b) of Danio rerio (Zebrafish).